The primary structure comprises 240 residues: NADH-quinone oxidoreductase subunit C (240 aa).

The interval 1–82 is disordered; sequence MSEEEKPKPK…PVDENRDPEP (82 aa). Low complexity predominate over residues 11–20; the sequence is LSPALAAKMA. The segment covering 67 to 82 has biased composition (basic and acidic residues); sequence DKPKAEPVDENRDPEP.

The protein belongs to the complex I 30 kDa subunit family. As to quaternary structure, NDH-1 is composed of 14 different subunits. Subunits NuoB, C, D, E, F, and G constitute the peripheral sector of the complex.

The protein localises to the cell inner membrane. The enzyme catalyses a quinone + NADH + 5 H(+)(in) = a quinol + NAD(+) + 4 H(+)(out). Its function is as follows. NDH-1 shuttles electrons from NADH, via FMN and iron-sulfur (Fe-S) centers, to quinones in the respiratory chain. The immediate electron acceptor for the enzyme in this species is believed to be a menaquinone. Couples the redox reaction to proton translocation (for every two electrons transferred, four hydrogen ions are translocated across the cytoplasmic membrane), and thus conserves the redox energy in a proton gradient. This chain is NADH-quinone oxidoreductase subunit C, found in Chloroherpeton thalassium (strain ATCC 35110 / GB-78).